Consider the following 363-residue polypeptide: MDNYTYSELLKSLQNKCDNIALIIKPEKIKQELERIEKEQEDPNFWQDVLKARDTNKEKVRLNRLLETYQKTKNSLDESVELFELAQNDNDEVTLSLLYEEAPTLEHSVQKVEIEIMLSGENDASNAIITIQPGAGGTESQDWASILYRMYLRWAERRGFKSEILDYQDGEEAGIKGVAFIIKGENAYGYLKNENGVHRLVRISPFDANAKRHTSFASVQISPELDDDIDIEIDEKDVRYDYYRASGAGGQHVNKTESAVRITHFPTGIVVQCQNDRSQHKNKASALKMLKSKLYELELEKQQSSAKNEEKSEIGWGHQIRSYVLAPYQQVKDARSNIAYSNVEAILDGDIDAILEGVLIAKA.

Residue Gln251 is modified to N5-methylglutamine.

Belongs to the prokaryotic/mitochondrial release factor family. Post-translationally, methylated by PrmC. Methylation increases the termination efficiency of RF2.

It is found in the cytoplasm. Peptide chain release factor 2 directs the termination of translation in response to the peptide chain termination codons UGA and UAA. The protein is Peptide chain release factor 2 of Helicobacter pylori (strain HPAG1).